The following is a 553-amino-acid chain: Glucose-6-phosphate isomerase (553 aa).

D-glucose 6-phosphate is bound by residues 164 to 165 (GS), 215 to 220 (SKTFTT), Gln-359, Glu-363, His-394, and Lys-516. Glu-363 functions as the Proton donor in the catalytic mechanism. Catalysis depends on residues His-394 and Lys-516.

The protein belongs to the GPI family. Homodimer.

The protein localises to the cytoplasm. It localises to the cytosol. The enzyme catalyses alpha-D-glucose 6-phosphate = beta-D-fructose 6-phosphate. It functions in the pathway carbohydrate degradation; glycolysis; D-glyceraldehyde 3-phosphate and glycerone phosphate from D-glucose: step 2/4. In terms of biological role, in the cytoplasm, catalyzes the conversion of glucose-6-phosphate to fructose-6-phosphate, the second step in glycolysis, and the reverse reaction during gluconeogenesis. This chain is Glucose-6-phosphate isomerase (pgiA), found in Aspergillus oryzae (strain ATCC 42149 / RIB 40) (Yellow koji mold).